We begin with the raw amino-acid sequence, 151 residues long: Large ribosomal subunit protein bL9 (151 aa).

This sequence belongs to the bacterial ribosomal protein bL9 family.

Its function is as follows. Binds to the 23S rRNA. The sequence is that of Large ribosomal subunit protein bL9 from Rhodococcus opacus (strain B4).